Here is a 337-residue protein sequence, read N- to C-terminus: 2-oxoglutarate receptor 1 (337 aa).

At 1-34 the chain is on the extracellular side; that stretch reads MNEPLDYLANASDFPDYAAAFGNCTDENIPLKMH. Residues N10 and N23 are each glycosylated (N-linked (GlcNAc...) asparagine). A helical transmembrane segment spans residues 35-55; the sequence is YLPVIYGIIFLVGFPGNAVVI. The Cytoplasmic portion of the chain corresponds to 56–69; that stretch reads STYIFKMRPWKSST. A helical transmembrane segment spans residues 70–90; that stretch reads IIMLNLACTDLLYLTSLPFLI. Residues 91-116 are Extracellular-facing; the sequence is HYYASGENWIFGDFMCKFIRFSFHFN. C106 and C183 are joined by a disulfide. Residues 117-137 traverse the membrane as a helical segment; that stretch reads LYSSILFLTCFSIFRYCVIIH. Residues 138–151 are Cytoplasmic-facing; it reads PMSCFSIHKTRCAV. A helical membrane pass occupies residues 152–172; it reads VACAVVWIISLVAVIPMTFLI. Residues 173-201 are Extracellular-facing; it reads TSTNRTNRSACLDLTSSDELNTIKWYNLI. 2 N-linked (GlcNAc...) asparagine glycosylation sites follow: N176 and N179. The chain crosses the membrane as a helical span at residues 202–222; sequence LTATTFCLPLVIVTLCYTTII. Residues 223 to 242 are Cytoplasmic-facing; the sequence is HTLTHGLQTDSCLKQKARRL. Residues 243-263 form a helical membrane-spanning segment; it reads TILLLLAFYVCFLPFHILRVI. Residues 264 to 284 are Extracellular-facing; the sequence is RIESRLLSISCSIENQIHEAY. The helical transmembrane segment at 285–305 threads the bilayer; sequence IVSRPLAALNTFGNLLLYVVV. The Cytoplasmic segment spans residues 306–337; sequence SDNFQQAVCSTVRCKVSGNLEQAKKISYSNNP.

It belongs to the G-protein coupled receptor 1 family. In terms of tissue distribution, detected in kidney and, to a lower extent, in placenta. Not detected in brain tissues including the frontal cortex, caudate putamen, thalamus, hypothalamus, hippocampus or pons.

The protein resides in the cell membrane. G protein-coupled receptor for dicarboxylates and amino dicarboxylates. Receptor for itaconate, a metabolite produced by myeloid lineages. In the respiratory epithelium, couples the binding of itaconate to the activation of GNA11 and downstream intracellular Ca(2+) release, leading to mucocilliary clearance of airborne pathogens. Receptor for leukotriene E4 (LTE4) produced by mast cells upon allergic inflammation. Binds with high affinity to LTE4 and elicits mucin release from pulmonary epithelium in response to airborne fungi allergens. Regulates mucin-producing goblet cell homeostasis. Receptor for alpha-ketoglutarate produced by proximal tubule renal cells upon metabolic alkalosis. In an intrarenal paracrine signaling pathway, binds alpha-ketoglutarate and drives transepithelial salt reabsorption and bicarbonate secretion by SLC26A4/pendrin-positive intercalated cells. In Homo sapiens (Human), this protein is 2-oxoglutarate receptor 1 (OXGR1).